We begin with the raw amino-acid sequence, 172 residues long: MFDAFTKVVAQADARGQFISTSEIDALAAMVSGRNKRLDAVSRISNNASTIVASAARELFAQQPALISPGGNAYTSRRMAACLRDMEIILRYVTYSAFTGDASVLEDRCLNGLRETYLALGTPGTSVAAGVNLMKDAALSIVNDRAGISNGDCASLSSEIGTYFDRAAASVA.

Position 72 is an N4-methylasparagine (Asn-72). Cys-82 provides a ligand contact to (2R,3E)-phycocyanobilin. Cys-153 is a (2R,3E)-phycoerythrobilin binding site.

It belongs to the phycobiliprotein family. Heterodimer of an alpha and a beta chain. In terms of processing, contains two covalently linked bilin chromophores.

The protein resides in the cellular thylakoid membrane. Light-harvesting photosynthetic bile pigment-protein from the phycobiliprotein complex. This Synechococcus sp. (strain WH8020) protein is R-phycocyanin-2 beta chain (rpcB).